We begin with the raw amino-acid sequence, 267 residues long: MADS-box transcription factor 15 (267 aa).

Residues 1 to 61 enclose the MADS-box domain; that stretch reads MGRGKVQLKR…GKLYEYATDS (61 aa). The K-box domain maps to 88 to 178; the sequence is EGNWCHEYRK…QKELVERQKN (91 aa). The tract at residues 179–215 is disordered; it reads VRGQQQVGQWDQTQVQAQAQAQPQAQTSSSSSSMLRD. Over residues 182 to 215 the composition is skewed to low complexity; it reads QQQVGQWDQTQVQAQAQAQPQAQTSSSSSSMLRD.

As to quaternary structure, may interact with the K-box of MADS1 and MADS6.

The protein localises to the nucleus. In terms of biological role, probable transcription factor. The sequence is that of MADS-box transcription factor 15 (MADS15) from Oryza sativa subsp. japonica (Rice).